A 119-amino-acid chain; its full sequence is Large ribosomal subunit protein uL24 (119 aa).

This sequence belongs to the universal ribosomal protein uL24 family. Part of the 50S ribosomal subunit.

One of two assembly initiator proteins, it binds directly to the 5'-end of the 23S rRNA, where it nucleates assembly of the 50S subunit. Functionally, located at the polypeptide exit tunnel on the outside of the subunit. This Methanococcus maripaludis (strain C5 / ATCC BAA-1333) protein is Large ribosomal subunit protein uL24.